The chain runs to 260 residues: Probable carbohydrate esterase At4g34215 (260 aa).

Residues 1–22 (MEGGSITPGEDKPEIQSPIPPN) form a disordered region. Active-site residues include S31, D235, and H238.

The protein belongs to the carbohydrate esterase 6 family.

The chain is Probable carbohydrate esterase At4g34215 from Arabidopsis thaliana (Mouse-ear cress).